A 1338-amino-acid chain; its full sequence is Nonribosomal peptide synthetase astA (1338 aa).

Residues 22 to 52 are disordered; it reads IAVVSGDIPSPHPKNEPSQTSTLHIPRDSDL. Positions 271–681 are adenylation; that stretch reads FQARCRQNPS…GRKGAEVKLR (411 aa). The Carrier domain occupies 820–893; it reads TPVEIIIHDA…SLAEKCSAGG (74 aa). Serine 854 carries the post-translational modification O-(pantetheine 4'-phosphoryl)serine. The segment at 949-1336 is condensation; the sequence is TFIFRLSGPV…IIRFLDSPDS (388 aa).

It belongs to the NRP synthetase family.

The enzyme catalyses 7beta,14,16-trihydroxyconfertifolin + benzoate + H(+) = dideacetyl astellolide A + H2O. The catalysed reaction is 7beta,14,16-trihydroxyconfertifolin + 4-hydroxybenzoate + H(+) = dideacetyl astellolide B + H2O. The protein operates within secondary metabolite biosynthesis; terpenoid biosynthesis. In terms of biological role, nonribosomal peptide synthetase; part of the gene cluster that mediates the biosynthesis of astellolides, drimane-type sesquiterpene esters that show antimicrobial, anti-inflammatory, and anti-tumor activities. The first step in astellolide biosynthesis is performed by the sesquiterpene cyclase astC that catalyzes the formation of drimanyl pyrophosphate from farnesyl pyrophosphate. Drimanyl pyrophosphate is then dephosphorylated by the sesquiterpene phosphatase astI to produce drimanyl monophosphate which is further dephosphorylated to drim-8-ene-11-ol by atsK. Drim-8-ene-11-ol is converted to confertifolin, probably by the cytochrome P450 monooxygenase astD and/or the dehydrogenase astE. The cytochrome P450 monooxygenases astB, astF and astJ then hydroxylate confertifolin at C6, C14, or C15 to form trihydroxy confertifolin. The nonribosomal peptide synthetase astA catalyzes ester bond formation between trihydroxy contifolin and benzoic acid (BA) or 4-hydroxy benzoic acid (4HBA), leading to the formation of dideacetyl astellolides A and B, respectively. Finally, the O-acetyltransferase astG converts dideacetyl astellolides A and B into deacetyl astellolides A and B. The chain is Nonribosomal peptide synthetase astA from Aspergillus oryzae (strain ATCC 42149 / RIB 40) (Yellow koji mold).